A 135-amino-acid chain; its full sequence is MNRLQLFSKGLRLIHKMSEEALAGVPLVHISPEGIFKYVLINVIDGGDASKAVVRGFDDCTWHADIFDREEEVFKKLGLRAECPGGGRIEHNPEKKYLKVYGYSQGFGKADHAQTKRILATKYPDYTIETSDEGY.

Substrate is bound at residue Lys37. His63 acts as the Proton acceptor in catalysis. Residue 104–106 coordinates substrate; the sequence is SQG.

Belongs to the janus family.

JanA and janB regulate somatic sex differentiation. The protein is Sex-regulated protein janus-A (janA) of Drosophila yakuba (Fruit fly).